Reading from the N-terminus, the 247-residue chain is DNA polymerase sliding clamp (247 aa).

The protein belongs to the PCNA family. Homotrimer. The subunits circularize to form a toroid; DNA passes through its center. Replication factor C (RFC) is required to load the toroid on the DNA.

Sliding clamp subunit that acts as a moving platform for DNA processing. Responsible for tethering the catalytic subunit of DNA polymerase and other proteins to DNA during high-speed replication. This is DNA polymerase sliding clamp from Methanocorpusculum labreanum (strain ATCC 43576 / DSM 4855 / Z).